Reading from the N-terminus, the 265-residue chain is Aquaporin-5 (265 aa).

The Cytoplasmic portion of the chain corresponds to 1–12 (MKKEVCSLAFLK). The chain crosses the membrane as a helical span at residues 13–33 (AVFAEFLATLIFVFFGLASAL). Topologically, residues 34-39 (KWPSAL) are extracellular. The helical transmembrane segment at 40–60 (PTILQIALAFGLAIGTLAQAL) threads the bilayer. Topologically, residues 61 to 65 (GPVSG) are cytoplasmic. An intramembrane region (discontinuously helical) is located at residues 66-74 (GHINPAITL). The short motif at 69 to 71 (NPA) is the NPA 1 element. At 75-87 (ALLVGNQISLLRA) the chain is on the cytoplasmic side. The chain crosses the membrane as a helical span at residues 88–108 (VFYVVAQLVGAIAGAGILYGL). Residues 109–126 (APGNARGNLAVNSLNNNT) lie on the Extracellular side of the membrane. Asn124 is a glycosylation site (N-linked (GlcNAc...) asparagine). Residues 127-147 (TPGQAVVVEMILTFQLALCIF) traverse the membrane as a helical segment. Residues 148 to 158 (SSTDSRRTSPV) are Cytoplasmic-facing. Residues 159–179 (GSPALSIGLSVTLGHLVGIYF) form a helical membrane-spanning segment. Residue Thr180 is a topological domain, extracellular. The discontinuously helical intramembrane region spans 181–191 (GCSMNPARSFG). Positions 185 to 187 (NPA) match the NPA 2 motif. Residues 192-203 (PAVVMNRFSPSH) are Extracellular-facing. Residues 204–224 (WVFWVGPIVGAAVAAILYFYL) traverse the membrane as a helical segment. Over 225–265 (LFPNSLSLSERVAVVKGTYESEEDWEEQREERKKTMELTAH) the chain is Cytoplasmic.

This sequence belongs to the MIP/aquaporin (TC 1.A.8) family. As to quaternary structure, homotetramer; each monomer provides an independent water pore. Interacts with TRPV4; the interaction is probably indirect and regulates TRPV4 activation by hypotonicity.

It localises to the apical cell membrane. The protein localises to the cell membrane. It is found in the cytoplasmic vesicle membrane. It carries out the reaction H2O(in) = H2O(out). In terms of biological role, aquaporins form homotetrameric transmembrane channels, with each monomer independently mediating water transport across the plasma membrane along its osmotic gradient. Plays an important role in fluid secretion in salivary glands. Required for TRPV4 activation by hypotonicity. Together with TRPV4, controls regulatory volume decrease in salivary epithelial cells. Seems to play a redundant role in water transport in the eye, lung and in sweat glands. In Sus scrofa (Pig), this protein is Aquaporin-5.